We begin with the raw amino-acid sequence, 668 residues long: tRNA 5-methylaminomethyl-2-thiouridine biosynthesis bifunctional protein MnmC (668 aa).

Residues Met-1–Glu-245 form a tRNA (mnm(5)s(2)U34)-methyltransferase region. An FAD-dependent cmnm(5)s(2)U34 oxidoreductase region spans residues Ile-270–Gly-668.

It in the N-terminal section; belongs to the methyltransferase superfamily. tRNA (mnm(5)s(2)U34)-methyltransferase family. The protein in the C-terminal section; belongs to the DAO family. FAD is required as a cofactor.

Its subcellular location is the cytoplasm. The catalysed reaction is 5-aminomethyl-2-thiouridine(34) in tRNA + S-adenosyl-L-methionine = 5-methylaminomethyl-2-thiouridine(34) in tRNA + S-adenosyl-L-homocysteine + H(+). In terms of biological role, catalyzes the last two steps in the biosynthesis of 5-methylaminomethyl-2-thiouridine (mnm(5)s(2)U) at the wobble position (U34) in tRNA. Catalyzes the FAD-dependent demodification of cmnm(5)s(2)U34 to nm(5)s(2)U34, followed by the transfer of a methyl group from S-adenosyl-L-methionine to nm(5)s(2)U34, to form mnm(5)s(2)U34. This Shigella boydii serotype 4 (strain Sb227) protein is tRNA 5-methylaminomethyl-2-thiouridine biosynthesis bifunctional protein MnmC.